The primary structure comprises 454 residues: MCAARRRELALIFRGTFVHSTWTCPMEVLRDHLLGVSDSGKIVFLEESSQQEKLAKEWCFKPCEIRELSHHEFFMPGLVDTHIHAPQYAFAGSNVDLPLLDWLNKYTFPTEKRFQSTDVAEEVYTRVVRRTLKNGTTTACYFGTIHTDSSLILAEITDKFGQRAFVGKVCMDLNNTVPEYKETTEESVKETERFVSEMLQKNYSRVKPIVTPRFSLSCTETLMSELGNIAKTHDLYIQSHISENREEIEAVKSLYPGYKNYTDVYDKNNLLTNKTVMAHGCYLSEEELNVFSERGASIAHCPNSNLSLSSGLLNVLDVLKHKVKIGLGTDVAGGYSYSMLDAIRRAVMVSNVLLINKVNEKSLTLKEVFRLATLGGSQALGLDREIGNFEVGKDFDALLINPRASDSPIDLFCGDFVGDISEAVIQKFLYLGDDRNIEEVYVGGKQVVPFSSSV.

Histidine 82 and histidine 84 together coordinate Zn(2+). Substrate is bound by residues 84-87, 213-214, 240-243, and aspartate 330; these read HAPQ, RF, and HISE. Zn(2+) contacts are provided by histidine 240 and aspartate 330. A Phosphoserine modification is found at serine 453.

This sequence belongs to the metallo-dependent hydrolases superfamily. ATZ/TRZ family. Homodimer. Zn(2+) serves as cofactor.

The catalysed reaction is guanine + H2O + H(+) = xanthine + NH4(+). It participates in purine metabolism; guanine degradation; xanthine from guanine: step 1/1. Catalyzes the hydrolytic deamination of guanine, producing xanthine and ammonia. In Rattus norvegicus (Rat), this protein is Guanine deaminase (Gda).